Consider the following 441-residue polypeptide: Xaa-Pro dipeptidase (441 aa).

Residues Asp-244, Asp-255, His-336, Glu-381, and Glu-420 each coordinate Mn(2+).

Belongs to the peptidase M24B family. Bacterial-type prolidase subfamily. It depends on Mn(2+) as a cofactor.

The catalysed reaction is Xaa-L-Pro dipeptide + H2O = an L-alpha-amino acid + L-proline. Functionally, splits dipeptides with a prolyl residue in the C-terminal position. This Xanthomonas oryzae pv. oryzae (strain MAFF 311018) protein is Xaa-Pro dipeptidase.